The following is a 229-amino-acid chain: Large ribosomal subunit protein uL1 (229 aa).

Belongs to the universal ribosomal protein uL1 family. Part of the 50S ribosomal subunit.

In terms of biological role, binds directly to 23S rRNA. The L1 stalk is quite mobile in the ribosome, and is involved in E site tRNA release. Functionally, protein L1 is also a translational repressor protein, it controls the translation of the L11 operon by binding to its mRNA. The sequence is that of Large ribosomal subunit protein uL1 from Leifsonia xyli subsp. xyli (strain CTCB07).